The primary structure comprises 180 residues: Large ribosomal subunit protein uL6 (180 aa).

It belongs to the universal ribosomal protein uL6 family. Part of the 50S ribosomal subunit.

Its function is as follows. This protein binds to the 23S rRNA, and is important in its secondary structure. It is located near the subunit interface in the base of the L7/L12 stalk, and near the tRNA binding site of the peptidyltransferase center. The chain is Large ribosomal subunit protein uL6 from Picosynechococcus sp. (strain ATCC 27264 / PCC 7002 / PR-6) (Agmenellum quadruplicatum).